We begin with the raw amino-acid sequence, 62 residues long: Pro-MCH variant (62 aa).

Residues 23–41 (GSVAFPAENGVQDTESTQE) are NGE-like. Residues 29–62 (AENGVQDTESTQEKRETGDEENSAKFPIGRRDFD) form a disordered region. The NEI-like stretch occupies residues 44–56 (ETGDEENSAKFPI). The interval 60 to 62 (DFD) is melanin-concentrating hormone-like.

Belongs to the melanin-concentrating hormone family.

This chain is Pro-MCH variant (PMCHL1), found in Pan paniscus (Pygmy chimpanzee).